Reading from the N-terminus, the 193-residue chain is BH3-interacting domain death agonist (193 aa).

The BH3 motif lies at 87–101 (IAAQLAEIGDQLDKQ).

As to quaternary structure, forms heterodimers either with the pro-apoptotic protein BAX or the anti-apoptotic protein Bcl-2.

The protein localises to the cytoplasm. It localises to the mitochondrion outer membrane. Functionally, induces caspases and apoptosis. Counters the protective effect of Bcl-2. In Gallus gallus (Chicken), this protein is BH3-interacting domain death agonist (BID).